The sequence spans 648 residues: Protein KASH5 (648 aa).

At 1–606 the chain is on the cytoplasmic side; the sequence is MHSILRSSLS…HSPGIRISQH (606 aa). Residues 206–228 form a disordered region; it reads PEAEESANLESFGGEDPRPEGPA. The stretch at 230–420 forms a coiled coil; that stretch reads AELLSNLEDL…EEQLSQSQEG (191 aa). The span at 473–497 shows a compositional bias: acidic residues; sequence EVEPEPEPEPEPEPEPEPQEVEFPS. The segment at 473–545 is disordered; it reads EVEPEPEPEP…EESWVLADPS (73 aa). The chain crosses the membrane as a helical; Anchor for type IV membrane protein span at residues 607–627; the sequence is PLVPTPVLGLLLLLLLSILLF. The Perinuclear space segment spans residues 628 to 648; the sequence is SQSPPPTWPHLQLYYLQPPPV.

As to quaternary structure, core component the LINC complex which is composed of inner nuclear membrane SUN domain-containing proteins coupled to outer nuclear membrane KASH domain-containing nesprins. SUN and KASH domain-containing proteins seem to bind each other promiscuously; however, differentially expression of LINC complex constituents is giving rise to specific assemblies. At least SUN1/2-containing core LINC complexes are proposed to be hexameric composed of three protomers of each KASH and SUN domain-containing protein. Interacts with SUN1; this interaction mediates its telomere localization by forming a SUN1:KASH5 LINC complex. Component of a probable SUN2:KASH5 LINC complex. Self-associates. Interacts with DYNC1H1, DCTN1, DYNC1I1/2 and PAFAH1B1; suggesting the association with the dynein-dynactin motor complex. In terms of tissue distribution, restricted to the testis and the early ootidogenesis ovary. Expressed in spermatocytes and oocytes (at protein level).

Its subcellular location is the nucleus outer membrane. It is found in the nucleus. The protein localises to the chromosome. It localises to the telomere. The protein resides in the nucleus envelope. Functionally, as a component of the LINC (LInker of Nucleoskeleton and Cytoskeleton) complex, involved in the connection between the nuclear lamina and the cytoskeleton. The nucleocytoplasmic interactions established by the LINC complex play an important role in the transmission of mechanical forces across the nuclear envelope and in nuclear movement and positioning. Required for telomere attachment to nuclear envelope in the prophase of meiosis and for rapid telomere prophase movements implicating a SUN1/2:KASH5 LINC complex in which SUN1 and SUN2 seem to act at least partial redundantly. Required for homolog pairing during meiotic prophase in spermatocytes and probably oocytes. Essential for male and female gametogenesis. Recruits cytoplasmic dynein to telomere attachment sites at the nuclear envelope in spermatocytes. In oocytes is involved in meiotic resumption and spindle formation. The protein is Protein KASH5 of Mus musculus (Mouse).